The following is a 538-amino-acid chain: Cytochrome P450 monooxygenase xanG (538 aa).

Residues 44–64 (MILYYLASIPLAIICYLAWYL) form a helical membrane-spanning segment. Asn378 carries N-linked (GlcNAc...) asparagine glycosylation. A heme-binding site is contributed by Cys489.

It belongs to the cytochrome P450 family. It depends on heme as a cofactor.

The protein resides in the membrane. It functions in the pathway secondary metabolite biosynthesis. In terms of biological role, cytochrome P450 monooxygenase; part of the gene cluster that mediates the biosynthesis of the isocyanide xanthocillin and its derivatives. The first step of the pathway consists in the conversion of tyrosine into a vinyl-isonitrile intermediate by the isocyanide synthase xanB. Subsequent oxidative dimerization of this intermediate to form xanthocillin may involve the cytochrome P450 monooxygenase xanG, whose expression is coregulated with that of XanB. Xanthocillin can be further modified by the isonitrile hydratase-like protein xanA which introduces N-formyl groups and the methyltransferase xanE which introduces methyl groups, leading to the production of several derivatives including fumiformamide. Finally, fumiformamide can be subject to both oxidative and reductive cyclization to yield melanocins E and F, respectively. This is Cytochrome P450 monooxygenase xanG from Aspergillus fumigatus (strain ATCC MYA-4609 / CBS 101355 / FGSC A1100 / Af293) (Neosartorya fumigata).